Consider the following 800-residue polypeptide: MLLSLNWLREFVPYTGTAQELGDRLTMLGLELEEIIRPFDAIADIVVGHVLECGRHPEADKLSVCRVDVGTEVLDIVCGAPNVAAGQKVPVAKVGVTMPSGLKIKKAKLRGQPSCGMICSESELELSDESDGIMVLPQDSVPGVRLVDLLQLDDTVLDISITPNRADCLSVLGLAREVALAFDLPLTMPQLELREQGEDAGSDVTIAIADGAQCPVYQGRIIEGISTCPSPLWMRHRLKSVGVRPISAIVDVTNYILMELGQPLHAFDLDLLEGARIVVETAAEGERFTTLDGQERVLKASDLLIRDGAKAVALAGVMGGANTEINDASRRVFLECAVFKPATIRRTARRLGLSSESSYRFERGVDQVLSTFAMNRAAQLMCELSGGVLRPGVCRAEPAPWQAAQLRFRPARAAALLGISLDDGFCRETLQKLGCTLSGADTPEWTVTAPSHRHDLEREADLIEEVGRVYGMDNIPPVLPKVSKPLEQGRTDSEYEFWARIKAWGRGLGLNEAVNYSFVGHKDLDFLGLPAGNRISIMNPLTSEQDVLRTELAPGLLNTLRHNLAQGSTGLQVFELAHIFEADQSSDTTARESGRLGLLVYGQRYQDGWPRREEDAGYEDLKGIVEHLLRVLNLGPAAFTLRKDHSWLLPCVEIRVGSVCAGVAGRVKPDIADAYHARKDVWMAEIDLDALRTLCRDVAVQFSALPVFPPVKRDITVMAPASVPVSAVTDHVRGMSLKLFSDIVLVDVFEPETPEGGTPERNLTFRLTFRHAERTLKDKEVDKERDKVAESLTEALGVRI.

The region spanning Phe-39–Val-147 is the tRNA-binding domain. One can recognise a B5 domain in the interval Trp-401–Pro-477. 4 residues coordinate Mg(2+): Asp-455, Asp-461, Glu-464, and Glu-465. An FDX-ACB domain is found at Pro-706–Ile-800.

The protein belongs to the phenylalanyl-tRNA synthetase beta subunit family. Type 1 subfamily. Tetramer of two alpha and two beta subunits. It depends on Mg(2+) as a cofactor.

The protein localises to the cytoplasm. The enzyme catalyses tRNA(Phe) + L-phenylalanine + ATP = L-phenylalanyl-tRNA(Phe) + AMP + diphosphate + H(+). The protein is Phenylalanine--tRNA ligase beta subunit of Oleidesulfovibrio alaskensis (strain ATCC BAA-1058 / DSM 17464 / G20) (Desulfovibrio alaskensis).